A 494-amino-acid chain; its full sequence is Cytochrome P450 monooxygenase ccsD (494 aa).

Residues 5–25 (ISPRTLVLLAVTCSLLVLYFS) form a helical membrane-spanning segment. Cysteine 438 contacts heme. N-linked (GlcNAc...) asparagine glycosylation is found at asparagine 445 and asparagine 477.

The protein belongs to the cytochrome P450 family. Heme serves as cofactor.

The protein localises to the membrane. Its pathway is mycotoxin biosynthesis. Cytochrome P450 monooxygenase; part of the gene cluster that mediates the biosynthesis of a family of the mycotoxins cytochalasins E and K. The hybrid PKS-NRPS synthetase ccsA and the enoyl reductase ccsC are responsible for fusion of phenylalanine with an octaketide backbone and subsequent release of the stable tetramic acid precursor. The polyketide synthase module (PKS) of the PKS-NRPS ccsA is responsible for the synthesis of the octaketide backbone. The downstream nonribosomal peptide synthetase (NRPS) amidates the carboxyl end of the octaketide with a phenylalanine. A reductase-like domain (R) at the C-terminus catalyzes the reductive release of the polyketide-amino acid intermediate. Because ccsA lacks a designated enoylreductase (ER) domain, the required activity is provided the enoyl reductase ccsC. Upon formation of the 11-membered carbocycle-fused perhydroisoindolone intermediate, a number of oxidative steps are required to afford the final cytochalasin E and K, including two hydroxylations at C17 and C18, one alcohol oxidation at C17, one epoxidation at C6 and C7 and two Baeyer-Villiger oxidations. The oxidative modification at C17, C18 and the C6-C7 epoxidation are likely to be catalyzed by the two cytochrome P450 oxygenases ccsD and ccsG. CcsD may be responsible for the epoxidation of the C6-C7 double bond. CcsG may be responsible for the successive oxidative modifications at C17 and C18. The double Baeyer-Villiger oxidations of ketocytochalasin to precytochalasin and cytochalasin Z(16) are among the final steps leading to cytochalasin E and K and are catalyzed by ccsB. The first oxygen insertion step follows that of the classic BVMO mechanism, generating the ester precytochalasin. Release of precytochalasin into an aqueous environment can generate the shunt product iso-precytochalasin through spontaneous isomerization. Alternatively, precytochalasin can undergo further oxidation by ccsB to yield the in-line carbonate-containing cytochalasin Z(16). Cytochalasin Z(16) is a precursor to cytochalasin E and cytochalasin K, whereas iso-precytochalasin is a precursor to cytochalasin Z(17) and rosellichalasin. The hydrolyase ccsE may catalyze hydrolysis of epoxide bond in cytochalasin E to afford cytochalasin K. The function of ccsF has not been assigned but it may play a role in post-PKS-NRPS biosynthetic step, resistance or transport of cytochalasins and related PKS-NRPS products. The chain is Cytochrome P450 monooxygenase ccsD from Aspergillus clavatus (strain ATCC 1007 / CBS 513.65 / DSM 816 / NCTC 3887 / NRRL 1 / QM 1276 / 107).